Consider the following 471-residue polypeptide: Putative multidrug resistance protein MdtD (471 aa).

Topologically, residues 1-11 (MTDLPDSTRWQ) are periplasmic. Residues 12–32 (LWIVAFGFFMQSLDTTIVNTA) form a helical membrane-spanning segment. The Cytoplasmic portion of the chain corresponds to 33 to 48 (LPSMAQSLGESPLHMH). The helical transmembrane segment at 49-69 (MVIVSYVLTVAVMLPASGWLA) threads the bilayer. At 70–76 (DKVGVRN) the chain is on the periplasmic side. A helical membrane pass occupies residues 77–97 (IFFTAIVLFTLGSLFCALSGT). Topologically, residues 98–101 (LNEL) are cytoplasmic. A helical transmembrane segment spans residues 102–124 (LLARALQGVGGAMMVPVGRLTVM). The Periplasmic portion of the chain corresponds to 125-137 (KIVPREQYMAAMT). A helical membrane pass occupies residues 138–158 (FVTLPGQVGPLLGPALGGLLV). Topologically, residues 159–164 (EYASWH) are cytoplasmic. A helical membrane pass occupies residues 165-185 (WIFLINIPVGIIGAIATLLLM). Residues 186-196 (PNYTMQTWRFD) lie on the Periplasmic side of the membrane. The helical transmembrane segment at 197 to 217 (LSGFLLLAVGMAVLTLALDGS) threads the bilayer. The Cytoplasmic segment spans residues 218–224 (KGTGLSP). A helical transmembrane segment spans residues 225–245 (LAIAGLVAVGVVALVLYLLHA). At 246-262 (RNNNRALFSLKLFRTRT) the chain is on the periplasmic side. A helical membrane pass occupies residues 263-283 (FSLGLAGSFAGRIGSGMLPFM). Over 284 to 285 (TP) the chain is Cytoplasmic. Residues 286 to 306 (VFLQIGLGFSPFHAGLMMIPM) form a helical membrane-spanning segment. Over 307–341 (VLGSMGMKRIVVQVVNRFGYRRVLVATTLGLSLVT) the chain is Periplasmic. Residues 342–362 (LLFMTTALLGWYYVLPFVLFL) traverse the membrane as a helical segment. Topologically, residues 363–395 (QGMVNSTRFSSMNTLTLKDLPDNLASSGNSLLS) are cytoplasmic. The helical transmembrane segment at 396–416 (MIMQLSMSIGVTIAGLLLGLF) threads the bilayer. Residues 417 to 430 (GSQHVSVDSGTTQT) lie on the Periplasmic side of the membrane. The chain crosses the membrane as a helical span at residues 431–451 (VFMYTWLSMALIIALPAFIFA). The Cytoplasmic segment spans residues 452-471 (RVPNDTHQNVAISRRKRSAQ).

Belongs to the major facilitator superfamily. TCR/Tet family.

It is found in the cell inner membrane. The polypeptide is Putative multidrug resistance protein MdtD (Shigella boydii serotype 4 (strain Sb227)).